Reading from the N-terminus, the 911-residue chain is Anoctamin-6 (911 aa).

Over Met1–Ala301 the chain is Cytoplasmic. A helical membrane pass occupies residues Trp302–Leu322. Topologically, residues Tyr323–Ser376 are extracellular. N-linked (GlcNAc...) asparagine glycosylation is present at Asn330. Disulfide bonds link Cys331/Cys372, Cys338/Cys365, Cys349/Cys807, Cys352/Cys356, and Cys596/Cys601. An N-linked (GlcNAc...) asparagine glycan is attached at Asn362. Residues Phe377–Trp397 form a helical membrane-spanning segment. Topologically, residues Lys398–Cys456 are cytoplasmic. A helical membrane pass occupies residues Ala457–Tyr477. Residues Arg478 to Ser510 lie on the Extracellular side of the membrane. Asn494 carries an N-linked (GlcNAc...) asparagine glycan. The chain crosses the membrane as a helical span at residues Ile511 to Val531. At Ala532 to Thr552 the chain is on the cytoplasmic side. A helical membrane pass occupies residues Met553 to Phe573. Residues Lys574–Leu602 lie on the Extracellular side of the membrane. A helical transmembrane segment spans residues Leu603–Ile622. Residues Gln623–Leu664 lie on the Cytoplasmic side of the membrane. The Ca(2+) site is built by Glu624, Glu667, and Glu670. 2 consecutive transmembrane segments (helical) span residues Phe665–Phe685 and Pro686–Lys706. Topologically, residues Leu707–Gly723 are cytoplasmic. Residues Ala724–Ile744 form a helical membrane-spanning segment. Residues Ala745–Ala837 lie on the Extracellular side of the membrane. N-linked (GlcNAc...) asparagine glycans are attached at residues Asn778, Asn785, and Asn803. A helical transmembrane segment spans residues Phe838–Pro858. The Cytoplasmic segment spans residues Asp859 to Glu911.

Belongs to the anoctamin family. Homodimer. Predominant expression seen in epithelial tissues. Also found in skeletal system where it is primarily expressed in osteoblasts.

It is found in the cell membrane. The catalysed reaction is a 1,2-diacyl-sn-glycero-3-phospho-L-serine(in) = a 1,2-diacyl-sn-glycero-3-phospho-L-serine(out). It carries out the reaction a beta-D-galactosyl-(1&lt;-&gt;1')-N-acylsphing-4-enine(out) = a beta-D-galactosyl-(1&lt;-&gt;1')-N-acylsphing-4-enine(in). It catalyses the reaction a 1,2-diacyl-sn-glycero-3-phosphocholine(in) = a 1,2-diacyl-sn-glycero-3-phosphocholine(out). With respect to regulation, exhibits synergistic gating by Ca(2+) and voltage. Inhibited by some non-specific cation channel blockers such as: ruthenium red, 2-aminoethyl diphenylborinate (2APB), gadolinium and cadmium ions. Its function is as follows. Small-conductance calcium-activated nonselective cation (SCAN) channel which acts as a regulator of phospholipid scrambling in platelets, osteoblasts and fetal thymocytes. Phospholipid scrambling results in surface exposure of phosphatidylserine which in platelets is essential to trigger the clotting system whereas in osteoblasts is essential for the deposition of hydroxyapatite during bone mineralization. Has calcium-dependent phospholipid scramblase activity; scrambles phosphatidylserine, phosphatidylcholine and galactosylceramide. Can generate outwardly rectifying chloride channel currents in airway epithelial cells and Jurkat T lymphocytes. This chain is Anoctamin-6 (Ano6), found in Mus musculus (Mouse).